The primary structure comprises 1968 residues: RNA replication polyprotein (1968 aa).

In terms of domain architecture, Alphavirus-like MT spans 63–254 (SPYSAVVHSH…YQQPLKGGYL (192 aa)). Positions 883-991 (YKRVSGPGDG…SEHYEPQVLR (109 aa)) constitute an OTU domain. Positions 990–1080 (LRNGCVIESV…ISDEHMSFCG (91 aa)) constitute a Peptidase C23 domain. Active-site residues include C994 and H1075. The (+)RNA virus helicase ATP-binding domain occupies 1134–1316 (ATGVLGSALF…KVRSHRFLNC (183 aa)). 1166 to 1173 (GTFGSGKS) is a binding site for ATP. Residues 1317–1454 (NFIGRLPCEI…CKTAIPDDLN (138 aa)) enclose the (+)RNA virus helicase C-terminal domain. The RdRp catalytic domain maps to 1749–1856 (RICTESDYEA…SRRLQPTKKF (108 aa)).

It belongs to the potexviruses/carlaviruses RNA replication protein family. In terms of processing, specific enzymatic cleavages by the viral protease yield mature proteins.

It carries out the reaction RNA(n) + a ribonucleoside 5'-triphosphate = RNA(n+1) + diphosphate. The enzyme catalyses ATP + H2O = ADP + phosphate + H(+). Its function is as follows. RNA-directed RNA polymerase involved in viral RNA replication. In terms of biological role, protease: Thiol protease that cleaves the polyprotein. This chain is RNA replication polyprotein, found in Solanum tuberosum (Potato).